The sequence spans 147 residues: Nucleoside diphosphate kinase (147 aa).

Residues lysine 9, phenylalanine 57, arginine 85, threonine 91, arginine 102, and asparagine 112 each contribute to the ATP site. The Pros-phosphohistidine intermediate role is filled by histidine 115.

The protein belongs to the NDK family. As to quaternary structure, homotetramer. The cofactor is Mg(2+).

The protein resides in the cytoplasm. The catalysed reaction is a 2'-deoxyribonucleoside 5'-diphosphate + ATP = a 2'-deoxyribonucleoside 5'-triphosphate + ADP. The enzyme catalyses a ribonucleoside 5'-diphosphate + ATP = a ribonucleoside 5'-triphosphate + ADP. Major role in the synthesis of nucleoside triphosphates other than ATP. The ATP gamma phosphate is transferred to the NDP beta phosphate via a ping-pong mechanism, using a phosphorylated active-site intermediate. The sequence is that of Nucleoside diphosphate kinase from Listeria welshimeri serovar 6b (strain ATCC 35897 / DSM 20650 / CCUG 15529 / CIP 8149 / NCTC 11857 / SLCC 5334 / V8).